The following is a 303-amino-acid chain: uncharacterized protein (303 aa).

Helical transmembrane passes span 102–122 (TYLL…VMAI), 132–152 (FVLF…FLFF), 184–204 (LLYF…SLIY), and 221–241 (FILL…FLLF).

It localises to the membrane. This is an uncharacterized protein from Dictyostelium discoideum (Social amoeba).